We begin with the raw amino-acid sequence, 68 residues long: Small cysteine-rich protein 2 (68 aa).

The signal sequence occupies residues 1–24 (MAVKFHLCLLLIILVGMGAHVAFA).

This sequence belongs to the Cnidaria small cysteine-rich protein (SCRiP) family. gamma subfamily. In terms of processing, contains 4 disulfide bonds.

Its subcellular location is the secreted. The protein resides in the nematocyst. In terms of biological role, induces neurotoxic symptoms on zebrafish. Has also been claimed to be implied in calcification, but tests on homolog proteins suggest that proteins of this family have a neurotoxic function and not a calcification function. In Orbicella faveolata (Mountainous star coral), this protein is Small cysteine-rich protein 2.